The primary structure comprises 416 residues: Gamma-glutamyl phosphate reductase (416 aa).

It belongs to the gamma-glutamyl phosphate reductase family.

The protein resides in the cytoplasm. It carries out the reaction L-glutamate 5-semialdehyde + phosphate + NADP(+) = L-glutamyl 5-phosphate + NADPH + H(+). It functions in the pathway amino-acid biosynthesis; L-proline biosynthesis; L-glutamate 5-semialdehyde from L-glutamate: step 2/2. Its function is as follows. Catalyzes the NADPH-dependent reduction of L-glutamate 5-phosphate into L-glutamate 5-semialdehyde and phosphate. The product spontaneously undergoes cyclization to form 1-pyrroline-5-carboxylate. The sequence is that of Gamma-glutamyl phosphate reductase from Glaesserella parasuis serovar 5 (strain SH0165) (Haemophilus parasuis).